The chain runs to 452 residues: Tripartite motif-containing protein 51 (452 aa).

The RING-type zinc-finger motif lies at 15–56; the sequence is CPICMNYFLDPVTIDCGHSFCRPCLYLNWQDTAVLAQCSECK. The segment at 88–129 adopts a B box-type zinc-finger fold; that stretch reads SEEQICGMHRETKKMFCEVDKSLLCLPCSNSQEHRNHIHCPI. The Zn(2+) site is built by C93, H96, C115, and H121. One can recognise a B30.2/SPRY domain in the interval 269 to 452; sequence ELSAGPITGL…LRPIFCCSHF (184 aa).

It belongs to the TRIM/RBCC family.

The chain is Tripartite motif-containing protein 51 (TRIM51) from Homo sapiens (Human).